Here is a 122-residue protein sequence, read N- to C-terminus: Large ribosomal subunit protein uL14 (122 aa).

The protein belongs to the universal ribosomal protein uL14 family. As to quaternary structure, part of the 50S ribosomal subunit. Forms a cluster with proteins L3 and L19. In the 70S ribosome, L14 and L19 interact and together make contacts with the 16S rRNA in bridges B5 and B8.

In terms of biological role, binds to 23S rRNA. Forms part of two intersubunit bridges in the 70S ribosome. The sequence is that of Large ribosomal subunit protein uL14 from Nitratidesulfovibrio vulgaris (strain ATCC 29579 / DSM 644 / CCUG 34227 / NCIMB 8303 / VKM B-1760 / Hildenborough) (Desulfovibrio vulgaris).